The primary structure comprises 178 residues: MPKAKGKTRRQKFGYSVNRKRLNRNARRKAAPRIECSHIRHAWDHAKSVRQNLAEMGLAVDPNRAVPLRKRKVKAMEVDIEERPKELVRKPYVLNDLEAEASLPEKKGNTLSRDLIDYVRYMVENHGEDYKAMARDEKNYYQDTPKQIRSKINVYKRFYPAEWQDFLDSLQKRKMEVE.

The tract at residues 1 to 31 (MPKAKGKTRRQKFGYSVNRKRLNRNARRKAA) is disordered. Thr8 carries the post-translational modification Phosphothreonine. The residue at position 16 (Ser16) is a Phosphoserine. Lys74 is covalently cross-linked (Glycyl lysine isopeptide (Lys-Gly) (interchain with G-Cter in SUMO2)). An N6-acetyllysine modification is found at Lys90. Thr144 bears the Phosphothreonine mark. Residues Phe166, Leu167, Lys172, and Arg173 each participate in a glycyl lysine isopeptide (Lys-Gly) (interchain with G-Cter in SUMO2) cross-link.

The protein belongs to the NOP16 family.

It is found in the nucleus. The protein resides in the nucleolus. This chain is Nucleolar protein 16 (NOP16), found in Homo sapiens (Human).